Consider the following 486-residue polypeptide: Membrane-bound lytic murein transglycosylase F (486 aa).

Positions 1–29 (MFSPTALRPRYAKWLIATGLFLMLSGCVD) are cleaved as a signal peptide. A non-LT domain region spans residues 30–267 (KPNTLERVKE…RLKDRYYGHV (238 aa)). The LT domain stretch occupies residues 268–486 (DVLGYMGATT…SKPAQEPAPL (219 aa)). Residue Glu-314 is part of the active site.

It in the N-terminal section; belongs to the bacterial solute-binding protein 3 family. In the C-terminal section; belongs to the transglycosylase Slt family.

The protein localises to the cell outer membrane. The enzyme catalyses Exolytic cleavage of the (1-&gt;4)-beta-glycosidic linkage between N-acetylmuramic acid (MurNAc) and N-acetylglucosamine (GlcNAc) residues in peptidoglycan, from either the reducing or the non-reducing ends of the peptidoglycan chains, with concomitant formation of a 1,6-anhydrobond in the MurNAc residue.. Its function is as follows. Murein-degrading enzyme that degrades murein glycan strands and insoluble, high-molecular weight murein sacculi, with the concomitant formation of a 1,6-anhydromuramoyl product. Lytic transglycosylases (LTs) play an integral role in the metabolism of the peptidoglycan (PG) sacculus. Their lytic action creates space within the PG sacculus to allow for its expansion as well as for the insertion of various structures such as secretion systems and flagella. The protein is Membrane-bound lytic murein transglycosylase F of Pseudomonas fluorescens (strain Pf0-1).